The chain runs to 89 residues: Small ribosomal subunit protein uS15 (89 aa).

Basic and acidic residues predominate over residues 1 to 21 (MAITQERKNQLINEFKTHESD). A disordered region spans residues 1-24 (MAITQERKNQLINEFKTHESDTGS).

It belongs to the universal ribosomal protein uS15 family. Part of the 30S ribosomal subunit. Forms a bridge to the 50S subunit in the 70S ribosome, contacting the 23S rRNA.

Functionally, one of the primary rRNA binding proteins, it binds directly to 16S rRNA where it helps nucleate assembly of the platform of the 30S subunit by binding and bridging several RNA helices of the 16S rRNA. Forms an intersubunit bridge (bridge B4) with the 23S rRNA of the 50S subunit in the ribosome. This is Small ribosomal subunit protein uS15 from Bacillus subtilis (strain 168).